A 299-amino-acid chain; its full sequence is Protease HtpX homolog (299 aa).

A run of 2 helical transmembrane segments spans residues 19-39 (LFIVLFSLILFAVGYFFVWYF) and 41-61 (WGITGIIFLAIFIVLYNWIAY). Residue H146 coordinates Zn(2+). E147 is an active-site residue. H150 provides a ligand contact to Zn(2+). A run of 2 helical transmembrane segments spans residues 156–176 (ILLMTVVAIVAGLIILLRDVF) and 198–218 (IILLLIGLILSIIAPIVVLII). E227 is a Zn(2+) binding site.

It belongs to the peptidase M48B family. Requires Zn(2+) as cofactor.

It is found in the cell membrane. This Caldanaerobacter subterraneus subsp. tengcongensis (strain DSM 15242 / JCM 11007 / NBRC 100824 / MB4) (Thermoanaerobacter tengcongensis) protein is Protease HtpX homolog.